The chain runs to 1284 residues: Kinesin-like protein KIN-4C (1284 aa).

Residues 12-364 (SVKVVVNIRP…LKYANRARNI (353 aa)) form the Kinesin motor domain. 91-98 (GQTGSGKT) lines the ATP pocket. Coiled coils occupy residues 407–445 (SAAL…EQLA), 561–711 (RDHS…QFRS), and 911–950 (MCKE…NMLL). Disordered stretches follow at residues 1040–1070 (RRQT…SQEK) and 1158–1284 (MSEK…NHLR). Residues 1043–1070 (TVSSHLNPNPGSGTTQKSAKSEMASQEK) are compositionally biased toward polar residues. 2 stretches are compositionally biased toward basic and acidic residues: residues 1158-1172 (MSEK…RKPL) and 1275-1284 (NANEKENHLR).

Belongs to the TRAFAC class myosin-kinesin ATPase superfamily. Kinesin family. KIN-4 subfamily. As to quaternary structure, homodimer.

Its function is as follows. Microtubule-dependent motor protein involved in the control of the oriented deposition of cellulose microfibrils. The protein is Kinesin-like protein KIN-4C of Oryza sativa subsp. japonica (Rice).